The following is a 319-amino-acid chain: Acetyl esterase (319 aa).

Residues 91 to 93 carry the Involved in the stabilization of the negatively charged intermediate by the formation of the oxyanion hole motif; sequence HGG. Catalysis depends on residues S165, D262, and H292.

Belongs to the 'GDXG' lipolytic enzyme family. As to quaternary structure, homodimer. Interacts with MalT and MelA.

The protein localises to the cytoplasm. Displays esterase activity towards short chain fatty esters (acyl chain length of up to 8 carbons). Able to hydrolyze triacetylglycerol (triacetin) and tributyrylglycerol (tributyrin), but not trioleylglycerol (triolein) or cholesterol oleate. Negatively regulates MalT activity by antagonizing maltotriose binding. Inhibits MelA galactosidase activity. The protein is Acetyl esterase of Escherichia coli O7:K1 (strain IAI39 / ExPEC).